The primary structure comprises 435 residues: Trigger factor (435 aa).

A PPIase FKBP-type domain is found at 161–246 (GDKLTLDFTG…IHKTEGPILP (86 aa)).

This sequence belongs to the FKBP-type PPIase family. Tig subfamily.

The protein localises to the cytoplasm. It catalyses the reaction [protein]-peptidylproline (omega=180) = [protein]-peptidylproline (omega=0). In terms of biological role, involved in protein export. Acts as a chaperone by maintaining the newly synthesized protein in an open conformation. Functions as a peptidyl-prolyl cis-trans isomerase. The chain is Trigger factor from Colwellia psychrerythraea (strain 34H / ATCC BAA-681) (Vibrio psychroerythus).